Reading from the N-terminus, the 709-residue chain is Heme/hemopexin utilization protein C (709 aa).

The N-terminal stretch at 1 to 21 (MRFSKLSLAITTTLVTANALA) is a signal peptide. The TBDR plug domain maps to 36-147 (DPSRFTYTPQ…LGGVVAMRTP (112 aa)). Positions 158–709 (KFGVKIRQGY…NAKISAVYSF (552 aa)) constitute a TBDR beta-barrel domain. A TonB C-terminal box motif is present at residues 692-709 (SLMEGTGRNAKISAVYSF).

Belongs to the TonB-dependent receptor family.

The protein resides in the cell outer membrane. Functionally, required for utilization of free heme at low concentrations. This Haemophilus influenzae (strain 86-028NP) protein is Heme/hemopexin utilization protein C (hxuC).